The following is a 293-amino-acid chain: ATP phosphoribosyltransferase (293 aa).

The protein belongs to the ATP phosphoribosyltransferase family. Long subfamily. Requires Mg(2+) as cofactor.

It is found in the cytoplasm. It catalyses the reaction 1-(5-phospho-beta-D-ribosyl)-ATP + diphosphate = 5-phospho-alpha-D-ribose 1-diphosphate + ATP. It functions in the pathway amino-acid biosynthesis; L-histidine biosynthesis; L-histidine from 5-phospho-alpha-D-ribose 1-diphosphate: step 1/9. Feedback inhibited by histidine. Functionally, catalyzes the condensation of ATP and 5-phosphoribose 1-diphosphate to form N'-(5'-phosphoribosyl)-ATP (PR-ATP). Has a crucial role in the pathway because the rate of histidine biosynthesis seems to be controlled primarily by regulation of HisG enzymatic activity. The sequence is that of ATP phosphoribosyltransferase from Nitratidesulfovibrio vulgaris (strain DP4) (Desulfovibrio vulgaris).